The chain runs to 124 residues: MADDLKRFLYKKLPSVEGLHAIVVSDRDGVPVIKVANDSAPEHALRPGFLSTFALATDQGSKLGLSKNKSIICYYNTYQVVQFNRLPLVVSFIASSNANTGLIVSLEKELAPLFEELIKVVEVS.

The tract at residues 57 to 70 (TDQGSKLGLSKNKS) is required for interaction with LAMTOR2.

This sequence belongs to the LAMTOR3 family. Part of the Ragulator complex composed of LAMTOR1, LAMTOR2, LAMTOR3, LAMTOR4 and LAMTOR5. LAMTOR4 and LAMTOR5 form a heterodimer that interacts, through LAMTOR1, with a LAMTOR2, LAMTOR3 heterodimer. Interacts with LAMTOR1 and LAMTOR2; the interaction is direct. The Ragulator complex interacts with both the mTORC1 complex and heterodimers constituted of the Rag GTPases RagA/RRAGA, RagB/RRAGB, RagC/RRAGC and RagD/RRAGD; regulated by amino acid availability. The Ragulator complex interacts with SLC38A9; the probable amino acid sensor. Component of the lysosomal folliculin complex (LFC), composed of FLCN, FNIP1 (or FNIP2), RagA/RRAGA or RagB/RRAGB GDP-bound, RagC/RRAGC or RagD/RRAGD GTP-bound, and Ragulator. Interacts with MAP2K1/MEK1 and MAPK2. Interacts with MORG1.

It is found in the late endosome membrane. In terms of biological role, as part of the Ragulator complex it is involved in amino acid sensing and activation of mTORC1, a signaling complex promoting cell growth in response to growth factors, energy levels, and amino acids. Activated by amino acids through a mechanism involving the lysosomal V-ATPase, the Ragulator plays a dual role for the small GTPases Rag (RagA/RRAGA, RagB/RRAGB, RagC/RRAGC and/or RagD/RRAGD): it (1) acts as a guanine nucleotide exchange factor (GEF), activating the small GTPases Rag and (2) mediates recruitment of Rag GTPases to the lysosome membrane. Activated Ragulator and Rag GTPases function as a scaffold recruiting mTORC1 to lysosomes where it is in turn activated. Adapter protein that enhances the efficiency of the MAP kinase cascade facilitating the activation of MAPK2. The sequence is that of Ragulator complex protein LAMTOR3 (Lamtor3) from Rattus norvegicus (Rat).